Consider the following 241-residue polypeptide: Eukaryotic translation initiation factor 3 subunit J (241 aa).

Residues 1–27 are compositionally biased toward basic and acidic residues; the sequence is MEEDWEQHGEKEEVPLPAKKPDANKWD. The interval 1–99 is disordered; the sequence is MEEDWEQHGE…ENMTPEQKLA (99 aa). Over residues 28-45 the composition is skewed to acidic residues; the sequence is GEDEEEEVKDSWEDEDEL. Residues 31–119 are a coiled coil; that stretch reads EEEEVKDSWE…ESDLKNALDT (89 aa). Basic and acidic residues-rich tracts occupy residues 46 to 58 and 69 to 90; these read EEKKDEEKVETPK and IVEKEKQKHEEAERRRLEKEAE.

Belongs to the eIF-3 subunit J family. In terms of assembly, component of the eukaryotic translation initiation factor 3 (eIF-3) complex.

It is found in the cytoplasm. In terms of biological role, component of the eukaryotic translation initiation factor 3 (eIF-3) complex, which is involved in protein synthesis of a specialized repertoire of mRNAs and, together with other initiation factors, stimulates binding of mRNA and methionyl-tRNAi to the 40S ribosome. The eIF-3 complex specifically targets and initiates translation of a subset of mRNAs involved in cell proliferation. In Culex quinquefasciatus (Southern house mosquito), this protein is Eukaryotic translation initiation factor 3 subunit J.